We begin with the raw amino-acid sequence, 80 residues long: MYILGLGIGALVVTFIIAVIVWTIVYIEYKKLVRQKKIDRLIERIGERAEDSGNESDGDTEELSKLMEMGHLNLGYVADL.

The Extracellular portion of the chain corresponds to 1-6; the sequence is MYILGL. Residues 7–27 traverse the membrane as a helical segment; it reads GIGALVVTFIIAVIVWTIVYI. Topologically, residues 28–80 are cytoplasmic; sequence EYKKLVRQKKIDRLIERIGERAEDSGNESDGDTEELSKLMEMGHLNLGYVADL. 2 positions are modified to phosphoserine; by host CK2: Ser52 and Ser56.

It belongs to the HIV-1 VPU protein family. In terms of assembly, homopentamer. Interacts with host CD4 and BRTC; these interactions induce proteasomal degradation of CD4. Interacts with host BST2; this interaction leads to the degradation of host BST2. Interacts with host FBXW11. Interacts with host AP1M1; this interaction plays a role in the mistrafficking and subsequent degradation of host BST2. Interacts with host RANBP2; this interaction allows Vpu to down-regulate host BLM sumoylation. In terms of processing, phosphorylated by host CK2. This phosphorylation is necessary for interaction with human BTRC and degradation of CD4.

The protein localises to the host membrane. With respect to regulation, ion channel activity is inhibited by hexamethylene amiloride in vitro. In terms of biological role, enhances virion budding by targeting host CD4 and Tetherin/BST2 to proteasome degradation. Degradation of CD4 prevents any unwanted premature interactions between viral Env and its host receptor CD4 in the endoplasmic reticulum. Degradation of antiretroviral protein Tetherin/BST2 is important for virion budding, as BST2 tethers new viral particles to the host cell membrane. Mechanistically, Vpu bridges either CD4 or BST2 to BTRC, a substrate recognition subunit of the Skp1/Cullin/F-box protein E3 ubiquitin ligase, induces their ubiquitination and subsequent proteasomal degradation. The alteration of the E3 ligase specificity by Vpu seems to promote the degradation of host IKBKB, leading to NF-kappa-B down-regulation and subsequent apoptosis. Acts as a viroporin that forms an oligomeric ion channel in membranes. Modulates the host DNA repair mechanisms to promote degradation of nuclear viral cDNA in cells that are already productively infected in order to suppress immune sensing and proviral hyper-integration (superinfection). Manipulates PML-NBs and modulates SUMOylation of host BLM protein thereby enhancing its DNA-end processing activity toward viral unintegrated linear DNA. Also inhibits RAD52-mediated homologous repair of viral cDNA, preventing the generation of dead-end circular forms of single copies of the long terminal repeat and permitting sustained nucleolytic attack. The chain is Protein Vpu from Human immunodeficiency virus type 1 group M subtype H (isolate 90CF056) (HIV-1).